A 1131-amino-acid polypeptide reads, in one-letter code: Kinesin-like protein CG14535 (1131 aa).

Polar residues predominate over residues 1 to 11 (MATTSTSNMSR). The disordered stretch occupies residues 1–25 (MATTSTSNMSRNGGFCGALQRAPPP). Residues 44 to 396 (KVKVMLRVAD…IQIASRIHRL (353 aa)) enclose the Kinesin motor domain. 4 disordered regions span residues 472-494 (ALKGSGLEKPPSKSASNSPMMMK), 693-753 (DLPD…SRDI), 905-926 (PAYRLTPSPPKQPSHSPSQGSL), and 1016-1072 (TSSE…QRHR). The span at 483–494 (SKSASNSPMMMK) shows a compositional bias: low complexity. Positions 1016-1032 (TSSEAYDSGHDSNSTPR) are enriched in polar residues.

The protein belongs to the TRAFAC class myosin-kinesin ATPase superfamily. Kinesin family. KIF26 subfamily.

It localises to the cytoplasm. It is found in the cytoskeleton. This is Kinesin-like protein CG14535 from Drosophila melanogaster (Fruit fly).